A 232-amino-acid chain; its full sequence is Phosphoadenosine 5'-phosphosulfate reductase (232 aa).

Cys-228 acts as the Nucleophile; cysteine thiosulfonate intermediate in catalysis.

This sequence belongs to the PAPS reductase family. CysH subfamily.

The protein localises to the cytoplasm. The catalysed reaction is [thioredoxin]-disulfide + sulfite + adenosine 3',5'-bisphosphate + 2 H(+) = [thioredoxin]-dithiol + 3'-phosphoadenylyl sulfate. It functions in the pathway sulfur metabolism; hydrogen sulfide biosynthesis; sulfite from sulfate: step 3/3. Functionally, catalyzes the formation of sulfite from phosphoadenosine 5'-phosphosulfate (PAPS) using thioredoxin as an electron donor. This is Phosphoadenosine 5'-phosphosulfate reductase from Synechococcus sp. (strain ATCC 27144 / PCC 6301 / SAUG 1402/1) (Anacystis nidulans).